The primary structure comprises 385 residues: Lipid-A-disaccharide synthase (385 aa).

It belongs to the LpxB family.

It carries out the reaction a lipid X + a UDP-2-N,3-O-bis[(3R)-3-hydroxyacyl]-alpha-D-glucosamine = a lipid A disaccharide + UDP + H(+). Its pathway is bacterial outer membrane biogenesis; LPS lipid A biosynthesis. Functionally, condensation of UDP-2,3-diacylglucosamine and 2,3-diacylglucosamine-1-phosphate to form lipid A disaccharide, a precursor of lipid A, a phosphorylated glycolipid that anchors the lipopolysaccharide to the outer membrane of the cell. This Xylella fastidiosa (strain M12) protein is Lipid-A-disaccharide synthase.